Reading from the N-terminus, the 488-residue chain is Cysteine--tRNA ligase (488 aa).

Residue C40 participates in Zn(2+) binding. The short motif at 42–52 (MTVYDYCHIGH) is the 'HIGH' region element. Zn(2+) is bound by residues C221, H246, and E250. Positions 278–282 (KMSKS) match the 'KMSKS' region motif. An ATP-binding site is contributed by K281.

The protein belongs to the class-I aminoacyl-tRNA synthetase family. In terms of assembly, monomer. The cofactor is Zn(2+).

It is found in the cytoplasm. It catalyses the reaction tRNA(Cys) + L-cysteine + ATP = L-cysteinyl-tRNA(Cys) + AMP + diphosphate. This chain is Cysteine--tRNA ligase, found in Psychrobacter cryohalolentis (strain ATCC BAA-1226 / DSM 17306 / VKM B-2378 / K5).